Here is a 348-residue protein sequence, read N- to C-terminus: Small ribosomal subunit biogenesis GTPase RsgA (348 aa).

Residues 1–32 (MAKQKLTQNQKRRIHSNNAKALDRHRRQTKKQ) form a disordered region. The CP-type G domain maps to 106–274 (KNELSRPDYY…LIDSPGIREF (169 aa)). Residues 162–165 (NKID) and 216–224 (GQSGVGKSS) contribute to the GTP site. Zn(2+)-binding residues include C298, C303, H305, and C311.

The protein belongs to the TRAFAC class YlqF/YawG GTPase family. RsgA subfamily. As to quaternary structure, monomer. Associates with 30S ribosomal subunit, binds 16S rRNA. Requires Zn(2+) as cofactor.

It localises to the cytoplasm. Functionally, one of several proteins that assist in the late maturation steps of the functional core of the 30S ribosomal subunit. Helps release RbfA from mature subunits. May play a role in the assembly of ribosomal proteins into the subunit. Circularly permuted GTPase that catalyzes slow GTP hydrolysis, GTPase activity is stimulated by the 30S ribosomal subunit. This chain is Small ribosomal subunit biogenesis GTPase RsgA, found in Actinobacillus succinogenes (strain ATCC 55618 / DSM 22257 / CCUG 43843 / 130Z).